We begin with the raw amino-acid sequence, 164 residues long: UPF0305 protein MJ0646 (164 aa).

The protein belongs to the UPF0305 family.

This is UPF0305 protein MJ0646 from Methanocaldococcus jannaschii (strain ATCC 43067 / DSM 2661 / JAL-1 / JCM 10045 / NBRC 100440) (Methanococcus jannaschii).